A 928-amino-acid polypeptide reads, in one-letter code: RhoGEF domain-containing protein gxcH (928 aa).

Low complexity predominate over residues 30–48; it reads SKSFDNNNNNNSNTNNIKN. Disordered regions lie at residues 30-76, 90-201, and 318-410; these read SKSF…PPVP, ITNY…PPLG, and DNGV…NKDT. The span at 93–103 shows a compositional bias: polar residues; sequence YIPTTPPSINI. Acidic residues predominate over residues 112 to 123; sequence DNYDDNYDDNYS. Composition is skewed to polar residues over residues 129–141, 175–187, and 334–367; these read TSTT…SPEF, ETFN…EGLQ, and KSGT…NLRG. The span at 377-407 shows a compositional bias: low complexity; that stretch reads NQTTNKNNSNNNNNNTTTNNNNNNNNNNNNN. Positions 484–671 constitute a DH domain; it reads IFNKVVKEII…GKIVSDINGK (188 aa). The interval 699–807 is PH-like; that stretch reads FIGEGKVKKV…NKIEDQIVSE (109 aa). Residues 835–928 are disordered; the sequence is SDSQSDFVDH…NTEPENFSFY (94 aa). Low complexity predominate over residues 848–857; it reads QEQQEQQQQQ.

Its function is as follows. GTPase-activating protein. This chain is RhoGEF domain-containing protein gxcH (gxcH), found in Dictyostelium discoideum (Social amoeba).